A 104-amino-acid chain; its full sequence is Holotricin-3 (104 aa).

An N-terminal signal peptide occupies residues 1 to 20; it reads MNKLIILGLACIIAVASAMP. A disordered region spans residues 22-104; sequence GPGDGHGGGH…HHGGYQTHGY (83 aa). Gly residues predominate over residues 23-97; the sequence is PGDGHGGGHG…PGGHGGGHHG (75 aa). A run of 18 repeats spans residues 27–30, 31–34, 35–38, 39–42, 43–46, 47–50, 51–54, 55–58, 59–62, 63–66, 67–70, 71–74, 75–78, 79–82, 83–86, 87–90, 91–94, and 96–98. The tract at residues 27 to 98 is 18 X 4 AA approximate tandem repeats of H-G-G-G; that stretch reads HGGGHGGGHG…GGHGGGHHGG (72 aa).

This sequence to T.molitor tenecin 3.

The protein resides in the secreted. Functionally, has antifungal activity against C.albicans. This is Holotricin-3 from Holotrichia diomphalia (Korean black chafer).